We begin with the raw amino-acid sequence, 440 residues long: Xaa-Pro dipeptidase (440 aa).

Mn(2+) is bound by residues D244, D255, H336, E381, and E420.

Belongs to the peptidase M24B family. Bacterial-type prolidase subfamily. The cofactor is Mn(2+).

The enzyme catalyses Xaa-L-Pro dipeptide + H2O = an L-alpha-amino acid + L-proline. Splits dipeptides with a prolyl residue in the C-terminal position. This Pseudoalteromonas translucida (strain TAC 125) protein is Xaa-Pro dipeptidase.